We begin with the raw amino-acid sequence, 510 residues long: Probable inositol 3-phosphate synthase isozyme 3 (510 aa).

It belongs to the myo-inositol 1-phosphate synthase family. NAD(+) is required as a cofactor. Expressed in siliques, leaves, roots, seed endosperm, but not in embryos. Highest expression in roots. Confined to vascular tissue and hydathodes of leaves.

Its subcellular location is the cytoplasm. The catalysed reaction is D-glucose 6-phosphate = 1D-myo-inositol 3-phosphate. The protein operates within polyol metabolism; myo-inositol biosynthesis; myo-inositol from D-glucose 6-phosphate: step 1/2. Functionally, key enzyme in myo-inositol biosynthesis pathway that catalyzes the conversion of glucose 6-phosphate to 1-myo-inositol 1-phosphate in a NAD-dependent manner. The polypeptide is Probable inositol 3-phosphate synthase isozyme 3 (IPS3) (Arabidopsis thaliana (Mouse-ear cress)).